The primary structure comprises 373 residues: Queuine tRNA-ribosyltransferase (373 aa).

The active-site Proton acceptor is Asp90. Substrate-binding positions include Asp90–Phe94, Asp144, Gln193, and Gly220. The segment at Gly251–Asp257 is RNA binding. Asp270 acts as the Nucleophile in catalysis. Residues Thr275 to Arg279 form an RNA binding; important for wobble base 34 recognition region. Zn(2+) is bound by residues Cys308, Cys310, Cys313, and His339.

This sequence belongs to the queuine tRNA-ribosyltransferase family. Homodimer. Within each dimer, one monomer is responsible for RNA recognition and catalysis, while the other monomer binds to the replacement base PreQ1. Zn(2+) is required as a cofactor.

It catalyses the reaction 7-aminomethyl-7-carbaguanine + guanosine(34) in tRNA = 7-aminomethyl-7-carbaguanosine(34) in tRNA + guanine. It functions in the pathway tRNA modification; tRNA-queuosine biosynthesis. In terms of biological role, catalyzes the base-exchange of a guanine (G) residue with the queuine precursor 7-aminomethyl-7-deazaguanine (PreQ1) at position 34 (anticodon wobble position) in tRNAs with GU(N) anticodons (tRNA-Asp, -Asn, -His and -Tyr). Catalysis occurs through a double-displacement mechanism. The nucleophile active site attacks the C1' of nucleotide 34 to detach the guanine base from the RNA, forming a covalent enzyme-RNA intermediate. The proton acceptor active site deprotonates the incoming PreQ1, allowing a nucleophilic attack on the C1' of the ribose to form the product. After dissociation, two additional enzymatic reactions on the tRNA convert PreQ1 to queuine (Q), resulting in the hypermodified nucleoside queuosine (7-(((4,5-cis-dihydroxy-2-cyclopenten-1-yl)amino)methyl)-7-deazaguanosine). This is Queuine tRNA-ribosyltransferase from Campylobacter jejuni subsp. jejuni serotype O:6 (strain 81116 / NCTC 11828).